The chain runs to 211 residues: tRNA (guanine-N(7)-)-methyltransferase (211 aa).

The S-adenosyl-L-methionine site is built by E44, D69, D96, and D118. The active site involves D118. Residue K122 participates in substrate binding. The interval 124 to 129 (KHEKRR) is interaction with RNA. Substrate is bound by residues D154 and 191 to 194 (TEYE).

Belongs to the class I-like SAM-binding methyltransferase superfamily. TrmB family.

It carries out the reaction guanosine(46) in tRNA + S-adenosyl-L-methionine = N(7)-methylguanosine(46) in tRNA + S-adenosyl-L-homocysteine. It functions in the pathway tRNA modification; N(7)-methylguanine-tRNA biosynthesis. Functionally, catalyzes the formation of N(7)-methylguanine at position 46 (m7G46) in tRNA. The chain is tRNA (guanine-N(7)-)-methyltransferase from Streptococcus agalactiae serotype Ia (strain ATCC 27591 / A909 / CDC SS700).